We begin with the raw amino-acid sequence, 193 residues long: Ion-translocating oxidoreductase complex subunit A (193 aa).

Transmembrane regions (helical) follow at residues 5 to 25 (LLLLISTVLVNNFVLVKFLGL), 39 to 59 (VGMGLATTFVLTLTSAFAYLV), 72 to 92 (LSTLAFILVIAVVVQFTEMVI), 102 to 122 (ILGIYLPLITTNCIVLGLALL), 134 to 154 (VVYGFGGGLGFMLVLILFASL), and 170 to 190 (IAIGMVTAGLMSLAFLGFTGL).

This sequence belongs to the NqrDE/RnfAE family. In terms of assembly, the complex is composed of six subunits: RnfA, RnfB, RnfC, RnfD, RnfE and RnfG.

Its subcellular location is the cell inner membrane. In terms of biological role, part of a membrane-bound complex that couples electron transfer with translocation of ions across the membrane. The polypeptide is Ion-translocating oxidoreductase complex subunit A (Tolumonas auensis (strain DSM 9187 / NBRC 110442 / TA 4)).